We begin with the raw amino-acid sequence, 450 residues long: Ribosomal protein uS12 methylthiotransferase RimO (450 aa).

In terms of domain architecture, MTTase N-terminal spans 7–123; sequence QKVSMVSLGC…IAEILAEKSG (117 aa). Residues Cys16, Cys52, Cys86, Cys161, Cys165, and Cys168 each coordinate [4Fe-4S] cluster. The region spanning 147–377 is the Radical SAM core domain; sequence SSPAWFSYLK…MRIQARLSFK (231 aa). Residues 380-448 form the TRAM domain; sequence RELIGTTEQV…DYDLIGEIQE (69 aa).

It belongs to the methylthiotransferase family. RimO subfamily. The cofactor is [4Fe-4S] cluster.

The protein resides in the cytoplasm. It carries out the reaction L-aspartate(89)-[ribosomal protein uS12]-hydrogen + (sulfur carrier)-SH + AH2 + 2 S-adenosyl-L-methionine = 3-methylsulfanyl-L-aspartate(89)-[ribosomal protein uS12]-hydrogen + (sulfur carrier)-H + 5'-deoxyadenosine + L-methionine + A + S-adenosyl-L-homocysteine + 2 H(+). In terms of biological role, catalyzes the methylthiolation of an aspartic acid residue of ribosomal protein uS12. In Pelobacter propionicus (strain DSM 2379 / NBRC 103807 / OttBd1), this protein is Ribosomal protein uS12 methylthiotransferase RimO.